The primary structure comprises 166 residues: Putative membrane protein 164 (166 aa).

At 1–4 (MYHP) the chain is on the intravirion side. Residues 5–25 (VVQVLIGLILVIILILGFYHL) traverse the membrane as a helical segment. At 26–166 (KKKSCKTDTD…TIMGIARNIL (141 aa)) the chain is on the virion surface side.

The protein belongs to the asfivirus envelope protein p22 family.

It localises to the virion membrane. The protein resides in the host cell membrane. This is Putative membrane protein 164 from Ornithodoros (relapsing fever ticks).